Consider the following 116-residue polypeptide: Large ribosomal subunit protein bL19 (116 aa).

This sequence belongs to the bacterial ribosomal protein bL19 family.

In terms of biological role, this protein is located at the 30S-50S ribosomal subunit interface and may play a role in the structure and function of the aminoacyl-tRNA binding site. In Shewanella loihica (strain ATCC BAA-1088 / PV-4), this protein is Large ribosomal subunit protein bL19.